Consider the following 546-residue polypeptide: Chaperonin GroEL (546 aa).

ATP is bound by residues 30–33 (TLGP), Lys-51, 87–91 (DGTTT), Gly-415, 479–481 (NAA), and Asp-495. The tract at residues 527-546 (DESAAPAMPGGMGGMGDMGM) is disordered. The span at 536 to 546 (GGMGGMGDMGM) shows a compositional bias: gly residues.

This sequence belongs to the chaperonin (HSP60) family. In terms of assembly, forms a cylinder of 14 subunits composed of two heptameric rings stacked back-to-back. Interacts with the co-chaperonin GroES.

The protein resides in the cytoplasm. It catalyses the reaction ATP + H2O + a folded polypeptide = ADP + phosphate + an unfolded polypeptide.. Functionally, together with its co-chaperonin GroES, plays an essential role in assisting protein folding. The GroEL-GroES system forms a nano-cage that allows encapsulation of the non-native substrate proteins and provides a physical environment optimized to promote and accelerate protein folding. The protein is Chaperonin GroEL of Acidovorax sp. (strain JS42).